Consider the following 496-residue polypeptide: Probable malate:quinone oxidoreductase (496 aa).

It belongs to the MQO family. FAD serves as cofactor.

The enzyme catalyses (S)-malate + a quinone = a quinol + oxaloacetate. It participates in carbohydrate metabolism; tricarboxylic acid cycle; oxaloacetate from (S)-malate (quinone route): step 1/1. This is Probable malate:quinone oxidoreductase from Prochlorococcus marinus (strain NATL1A).